The following is a 409-amino-acid chain: Peptidase T (409 aa).

His-78 contributes to the Zn(2+) binding site. Asp-80 is a catalytic residue. Asp-140 serves as a coordination point for Zn(2+). Residue Glu-173 is the Proton acceptor of the active site. Positions 174, 196, and 379 each coordinate Zn(2+).

It belongs to the peptidase M20B family. Requires Zn(2+) as cofactor.

It localises to the cytoplasm. The catalysed reaction is Release of the N-terminal residue from a tripeptide.. In terms of biological role, cleaves the N-terminal amino acid of tripeptides. This chain is Peptidase T, found in Escherichia coli (strain SE11).